The chain runs to 664 residues: Glycine--tRNA ligase beta subunit (664 aa).

Belongs to the class-II aminoacyl-tRNA synthetase family. As to quaternary structure, tetramer of two alpha and two beta subunits.

It localises to the cytoplasm. It carries out the reaction tRNA(Gly) + glycine + ATP = glycyl-tRNA(Gly) + AMP + diphosphate. This is Glycine--tRNA ligase beta subunit from Rickettsia typhi (strain ATCC VR-144 / Wilmington).